Consider the following 783-residue polypeptide: E3 UFM1-protein ligase 1 homolog (783 aa).

A disordered region spans residues 406–476 (TLGTTHDADE…DAVQQSANSS (71 aa)). A compositionally biased stretch (basic residues) spans 446–457 (KSTKKHQRGRAA).

The protein belongs to the UFL1 family.

In terms of biological role, E3 UFM1-protein ligase that mediates ufmylation of target proteins. This is E3 UFM1-protein ligase 1 homolog from Drosophila grimshawi (Hawaiian fruit fly).